Reading from the N-terminus, the 510-residue chain is Anaerobic nitric oxide reductase transcription regulator NorR (510 aa).

The Sigma-54 factor interaction domain occupies 188–417; it reads IIGNSQGMRT…LEHVIKRAAV (230 aa). Residues 216–223 and 279–288 contribute to the ATP site; these read GETGVGKE and ADGGTLFLDE. Residues 486 to 505 constitute a DNA-binding region (H-T-H motif); the sequence is WAATARQLELDSGNLHRLAK.

The protein operates within nitrogen metabolism; nitric oxide reduction. Its function is as follows. Required for the expression of anaerobic nitric oxide (NO) reductase, acts as a transcriptional activator for at least the norVW operon. Activation also requires sigma-54. This Vibrio vulnificus (strain CMCP6) protein is Anaerobic nitric oxide reductase transcription regulator NorR.